The primary structure comprises 394 residues: Mannosyl-3-phosphoglycerate synthase (394 aa).

This sequence belongs to the glycosyltransferase 2 family. Requires Mg(2+) as cofactor.

It is found in the cytoplasm. The enzyme catalyses (2R)-3-phosphoglycerate + GDP-alpha-D-mannose = 2-O-(alpha-D-mannosyl)-3-phosphoglycerate + GDP + H(+). Its pathway is carbohydrate biosynthesis; 2-(alpha-D-mannosyl)-D-glycerate biosynthesis; 2-(alpha-D-mannosyl)-D-glycerate from GDP-alpha-D-mannose (MPG route): step 1/2. Its function is as follows. Transfers a mannosyl group from GDP-mannose to phosphoglycerate to form mannosyl-3-phosphoglycerate (MPG). The enzyme is absolutely specific for GDP-mannose and 3-phosphoglycerate, and transfers the mannosyl group with retention of configuration. In Pyrococcus horikoshii (strain ATCC 700860 / DSM 12428 / JCM 9974 / NBRC 100139 / OT-3), this protein is Mannosyl-3-phosphoglycerate synthase (mngA).